The chain runs to 194 residues: Large ribosomal subunit protein eL15 (194 aa).

A disordered region spans residues 164 to 194 (SAGKKGRGLRNKGKGAEKIRPSIRANEGKGK). Residues 167–176 (KKGRGLRNKG) are compositionally biased toward basic residues. A compositionally biased stretch (basic and acidic residues) spans 177-194 (KGAEKIRPSIRANEGKGK).

This sequence belongs to the eukaryotic ribosomal protein eL15 family.

The sequence is that of Large ribosomal subunit protein eL15 (rpl15e) from Pyrococcus abyssi (strain GE5 / Orsay).